We begin with the raw amino-acid sequence, 341 residues long: Phenazine O-methyltransferase PhzM (341 aa).

Residues Asp-205 and 231 to 233 each bind S-adenosyl-L-methionine; that span reads GDF. The active-site Proton acceptor is His-251.

This sequence belongs to the class I-like SAM-binding methyltransferase superfamily. Cation-independent O-methyltransferase family. Homodimer.

The enzyme catalyses 1,6-dihydroxyphenazine + S-adenosyl-L-methionine = 1-hydroxy-6-methoxyphenazine + S-adenosyl-L-homocysteine + H(+). It catalyses the reaction 1-hydroxy-6-methoxyphenazine + S-adenosyl-L-methionine = 1,6-dimethoxyphenazine + S-adenosyl-L-homocysteine + H(+). The catalysed reaction is 1-hydroxy-6-methoxyphenazine N(10)-oxide + S-adenosyl-L-methionine = 1,6-dimethoxyphenazine N(5)-oxide + S-adenosyl-L-homocysteine. It carries out the reaction 1,6-dihydroxyphenazine N(5),N(10)-dioxide + S-adenosyl-L-methionine = 1-hydroxy-6-methoxyphenazine N(5),N(10)-dioxide + S-adenosyl-L-homocysteine. The enzyme catalyses 1-hydroxy-6-methoxyphenazine N(5),N(10)-dioxide + S-adenosyl-L-methionine = 1,6-dimethoxyphenazine N(5),N(10)-dioxide + S-adenosyl-L-homocysteine. Its function is as follows. Involved in the biosynthesis of phenazine natural products including myxin, an N(5),N(10)-dioxide phenazine antiobiotic, which has antimicrobial activity. O-methyltransferase, which converts iodinin (1,6-dihydroxyphenazine N(5),N(10)-dioxide) to myxin (1-hydroxy-6-methoxyphenazine N(5),N(10)-dioxide). Catalyzes both monomethoxy and dimethoxy formation of phenazine natural compounds. Acts on a wide variety of substrates, catalyzing O-methylation of phenazines with non-, mono- or di-N-oxide. Highest activity with 1,6-dihydroxyphenazine (DHP) as substrate. Less active with monohydroxy-containing and monohydroxy-monomethoxy-containing phenazines. Least active with non-phenazine substrates, such as 8-hydroxyquinoline and 6-hydroxyquinoline. Is not able to convert 1-hydroxyphenazine to 1-hydroxy-N5-methylphenazine (pyocyanine), hence does not function as an N-methyltransferase. The sequence is that of Phenazine O-methyltransferase PhzM from Lysobacter antibioticus.